The sequence spans 732 residues: Acylamino-acid-releasing enzyme (732 aa).

M1 carries the N-acetylmethionine modification. Phosphoserine is present on residues S185 and S187. Residues S587, D675, and H707 each act as charge relay system in the active site.

Homotetramer. As to expression, expressed in erythrocytes (at protein level).

It is found in the cytoplasm. The catalysed reaction is Cleavage of an N-acetyl or N-formyl amino acid from the N-terminus of a polypeptide.. Homotetramerization is required for activity. Tetramerization results in the formation of a gated channel which is involved in substrate selection and substrate access to the catalytic sites. Its function is as follows. This enzyme catalyzes the hydrolysis of the N-terminal peptide bond of an N-acetylated peptide to generate an N-acetylated amino acid and a peptide with a free N-terminus. It preferentially cleaves off Ac-Ala, Ac-Met and Ac-Ser. Also, involved in the degradation of oxidized and glycated proteins. The chain is Acylamino-acid-releasing enzyme (APEH) from Homo sapiens (Human).